Consider the following 294-residue polypeptide: 4-hydroxy-tetrahydrodipicolinate synthase (294 aa).

A pyruvate-binding site is contributed by T47. Y135 serves as the catalytic Proton donor/acceptor. K163 (schiff-base intermediate with substrate) is an active-site residue. Position 205 (T205) interacts with pyruvate.

This sequence belongs to the DapA family. Homotetramer; dimer of dimers.

It localises to the cytoplasm. It catalyses the reaction L-aspartate 4-semialdehyde + pyruvate = (2S,4S)-4-hydroxy-2,3,4,5-tetrahydrodipicolinate + H2O + H(+). It functions in the pathway amino-acid biosynthesis; L-lysine biosynthesis via DAP pathway; (S)-tetrahydrodipicolinate from L-aspartate: step 3/4. In terms of biological role, catalyzes the condensation of (S)-aspartate-beta-semialdehyde [(S)-ASA] and pyruvate to 4-hydroxy-tetrahydrodipicolinate (HTPA). The protein is 4-hydroxy-tetrahydrodipicolinate synthase of Rickettsia rickettsii.